The following is a 124-amino-acid chain: Small ribosomal subunit protein uS12 (124 aa).

Aspartate 90 is subject to 3-methylthioaspartic acid.

The protein belongs to the universal ribosomal protein uS12 family. As to quaternary structure, part of the 30S ribosomal subunit. Contacts proteins S8 and S17. May interact with IF1 in the 30S initiation complex.

With S4 and S5 plays an important role in translational accuracy. Functionally, interacts with and stabilizes bases of the 16S rRNA that are involved in tRNA selection in the A site and with the mRNA backbone. Located at the interface of the 30S and 50S subunits, it traverses the body of the 30S subunit contacting proteins on the other side and probably holding the rRNA structure together. The combined cluster of proteins S8, S12 and S17 appears to hold together the shoulder and platform of the 30S subunit. The protein is Small ribosomal subunit protein uS12 of Wolbachia pipientis wMel.